Here is a 404-residue protein sequence, read N- to C-terminus: MKLPIYLDYAATCPVDERVVKKMMEFLSIDGNFGNPASRSHKFGWQAEEAVDVARNHIADLIGADSREIVFTSGATEADNLALKGVMRFYQTKGKHLITCKTEHKAILDTCRQLEREGFEVTYLDPKSDGLIDLEELKSVIRDDTVLVSIMHANNEIGVVQDIAKIGEICRERKVLFHTDATQSVGKLPINLSELKVDLLSMSSHKLYGPKGIGALYVCRKPRVRLEAIIHGGGHERGMRSGTLPVHQIVGMGEAYRIAKEEMATEMPRLTALRDRLYNGLKDIEETYVNGSMEQRLGNNLNISFNYVEGESLMMALRDIAVSSGSACTSASLEPSYVLRALGLNDELAHSSIRFTVGRYTTEEEIDYSIGLVKSAVKKLRDLSPLWDMFKEGIDLNSIEWTHH.

Pyridoxal 5'-phosphate contacts are provided by residues 75-76 (AT), asparagine 155, glutamine 183, and 203-205 (SSH). Lysine 206 carries the post-translational modification N6-(pyridoxal phosphate)lysine. Threonine 243 is a pyridoxal 5'-phosphate binding site. Cysteine 328 functions as the Cysteine persulfide intermediate in the catalytic mechanism. Cysteine 328 is a [2Fe-2S] cluster binding site.

Belongs to the class-V pyridoxal-phosphate-dependent aminotransferase family. NifS/IscS subfamily. In terms of assembly, homodimer. Forms a heterotetramer with IscU, interacts with other sulfur acceptors. Requires pyridoxal 5'-phosphate as cofactor.

The protein resides in the cytoplasm. The catalysed reaction is (sulfur carrier)-H + L-cysteine = (sulfur carrier)-SH + L-alanine. It participates in cofactor biosynthesis; iron-sulfur cluster biosynthesis. Master enzyme that delivers sulfur to a number of partners involved in Fe-S cluster assembly, tRNA modification or cofactor biosynthesis. Catalyzes the removal of elemental sulfur atoms from cysteine to produce alanine. Functions as a sulfur delivery protein for Fe-S cluster synthesis onto IscU, an Fe-S scaffold assembly protein, as well as other S acceptor proteins. The polypeptide is Cysteine desulfurase IscS (Histophilus somni (strain 2336) (Haemophilus somnus)).